The following is a 283-amino-acid chain: Pantothenate synthetase (283 aa).

ATP is bound at residue 26–33; it reads MGNLHEGH. His-33 serves as the catalytic Proton donor. Gln-57 lines the (R)-pantoate pocket. Gln-57 contributes to the beta-alanine binding site. 144–147 serves as a coordination point for ATP; it reads GKKD. Gln-150 contacts (R)-pantoate. ATP contacts are provided by residues Val-173 and 181–184; that span reads LSSR.

This sequence belongs to the pantothenate synthetase family. In terms of assembly, homodimer.

Its subcellular location is the cytoplasm. It catalyses the reaction (R)-pantoate + beta-alanine + ATP = (R)-pantothenate + AMP + diphosphate + H(+). The protein operates within cofactor biosynthesis; (R)-pantothenate biosynthesis; (R)-pantothenate from (R)-pantoate and beta-alanine: step 1/1. Its function is as follows. Catalyzes the condensation of pantoate with beta-alanine in an ATP-dependent reaction via a pantoyl-adenylate intermediate. The protein is Pantothenate synthetase of Ralstonia nicotianae (strain ATCC BAA-1114 / GMI1000) (Ralstonia solanacearum).